Here is a 318-residue protein sequence, read N- to C-terminus: NADH-ubiquinone oxidoreductase chain 1 (318 aa).

A run of 8 helical transmembrane segments spans residues 3–23 (LITLLSTIVPILLAVAFLTLV), 70–90 (MFIIAPILALALALTMWTPLP), 100–120 (LGILFMLAMSSLAVYAILWSG), 146–166 (LAIILLSILLMSGSYSLTTLI), 171–191 (YIWLILPSWPLTMMWFISTLA), 222–242 (LFFLAEYANIIMMNALTTILF), 254–273 (LYTTNFATKTLLLTMSFLWI), and 294–314 (LPLTLALCMWYVTMPIMLASI).

The protein belongs to the complex I subunit 1 family.

It is found in the mitochondrion inner membrane. The enzyme catalyses a ubiquinone + NADH + 5 H(+)(in) = a ubiquinol + NAD(+) + 4 H(+)(out). Its function is as follows. Core subunit of the mitochondrial membrane respiratory chain NADH dehydrogenase (Complex I) that is believed to belong to the minimal assembly required for catalysis. Complex I functions in the transfer of electrons from NADH to the respiratory chain. The immediate electron acceptor for the enzyme is believed to be ubiquinone. In Phyllostomus elongatus (Lesser spear-nosed bat), this protein is NADH-ubiquinone oxidoreductase chain 1 (MT-ND1).